The primary structure comprises 240 residues: MSSEELACKLQRRLRLEVRAETDQGDPQPAPCDAPAGHPEPEPPARAPTASADSELNLKLSRRLDIHQGTARPGRSKVFNPYTEFPEFSRRLLKDLEKMFKTYDAGRDGFIDLMELKLMMEKLGAPQTHLGLKSMIKEVDEDFDGKLSFREFLLIFHKAAAGELQEDSGLLALAKFSEIDVALEGVRGAKNFFEAKAQALSCSSKFEAELKAEQEERKREEEARRLRQAAFRELKAAFSA.

Residues 17-54 are disordered; it reads EVRAETDQGDPQPAPCDAPAGHPEPEPPARAPTASADS. 2 EF-hand domains span residues 91–126 and 127–162; these read RLLK…LGAP and QTHL…AAAG. Ca(2+) is bound by residues aspartate 104, aspartate 108, glutamate 115, aspartate 140, aspartate 142, aspartate 144, lysine 146, and glutamate 151.

Widely expressed. Highest expression in testis, followed by ovary, kidney, cerebrum, cerebellum, heart, liver, and spleen. In the cerebrum and cerebellum, undetectable at embryonic stages, expression increases after birth up to adult stage. In adult CNS, detected in neurons of the cerebellum, cerebrum and hippocampus formation, including dentate gyrus and Cornu Ammonis, but not in the white matter. In the testis, expressed in spermatocytes, but not in spermatogonia nor in interstitial cells. In ovary, found predominantly in mural granulosa cells and those of the cumulus oophorus. In kidney, expressed in collecting ducts, but not in glomeruli. Not detected in skeletal muscle.

The protein localises to the mitochondrion inner membrane. Functionally, acts as a calcium sensor for mitochondrial flash (mitoflash) activation, an event characterized by stochastic bursts of superoxide production. May play a role in neuronal differentiation. This Mus musculus (Mouse) protein is EF-hand domain-containing protein D1 (Efhd1).